A 254-amino-acid chain; its full sequence is 3-deoxy-manno-octulosonate cytidylyltransferase (254 aa).

This sequence belongs to the KdsB family.

The protein resides in the cytoplasm. It carries out the reaction 3-deoxy-alpha-D-manno-oct-2-ulosonate + CTP = CMP-3-deoxy-beta-D-manno-octulosonate + diphosphate. Its pathway is nucleotide-sugar biosynthesis; CMP-3-deoxy-D-manno-octulosonate biosynthesis; CMP-3-deoxy-D-manno-octulosonate from 3-deoxy-D-manno-octulosonate and CTP: step 1/1. It functions in the pathway bacterial outer membrane biogenesis; lipopolysaccharide biosynthesis. Activates KDO (a required 8-carbon sugar) for incorporation into bacterial lipopolysaccharide in Gram-negative bacteria. This chain is 3-deoxy-manno-octulosonate cytidylyltransferase, found in Chlamydia abortus (strain DSM 27085 / S26/3) (Chlamydophila abortus).